Here is a 470-residue protein sequence, read N- to C-terminus: ATP-dependent protease ATPase subunit HslU (470 aa).

Residues V22 and 64-69 each bind ATP; that span reads GVGKTE. Positions 145 to 187 are disordered; sequence KKANNNTNSNNPLESLFGGSIPNFGQNNDDEEETPTDEVKTKR. ATP contacts are provided by D283, E348, and R420.

It belongs to the ClpX chaperone family. HslU subfamily. A double ring-shaped homohexamer of HslV is capped on each side by a ring-shaped HslU homohexamer. The assembly of the HslU/HslV complex is dependent on binding of ATP.

Its subcellular location is the cytoplasm. Its function is as follows. ATPase subunit of a proteasome-like degradation complex; this subunit has chaperone activity. The binding of ATP and its subsequent hydrolysis by HslU are essential for unfolding of protein substrates subsequently hydrolyzed by HslV. HslU recognizes the N-terminal part of its protein substrates and unfolds these before they are guided to HslV for hydrolysis. This is ATP-dependent protease ATPase subunit HslU from Staphylococcus saprophyticus subsp. saprophyticus (strain ATCC 15305 / DSM 20229 / NCIMB 8711 / NCTC 7292 / S-41).